Here is a 316-residue protein sequence, read N- to C-terminus: Iron-sulfur cluster assembly SufBD family protein MJ0034 (316 aa).

This sequence belongs to the iron-sulfur cluster assembly SufBD family.

The protein is Iron-sulfur cluster assembly SufBD family protein MJ0034 of Methanocaldococcus jannaschii (strain ATCC 43067 / DSM 2661 / JAL-1 / JCM 10045 / NBRC 100440) (Methanococcus jannaschii).